Reading from the N-terminus, the 211-residue chain is Ribonuclease HII (211 aa).

In terms of domain architecture, RNase H type-2 spans Glu11–Ser200. 3 residues coordinate a divalent metal cation: Asp17, Glu18, and Asp109.

Belongs to the RNase HII family. Requires Mn(2+) as cofactor. Mg(2+) is required as a cofactor.

The protein localises to the cytoplasm. It catalyses the reaction Endonucleolytic cleavage to 5'-phosphomonoester.. In terms of biological role, endonuclease that specifically degrades the RNA of RNA-DNA hybrids. This Histophilus somni (strain 2336) (Haemophilus somnus) protein is Ribonuclease HII.